The sequence spans 384 residues: L-lactate dehydrogenase (384 aa).

The 380-residue stretch at 1–380 (MIISSSNDYR…NESCLVEMNK (380 aa)) folds into the FMN hydroxy acid dehydrogenase domain. Residue Tyr-24 participates in substrate binding. FMN-binding residues include Ser-106 and Gln-127. Tyr-129 contributes to the substrate binding site. Position 155 (Thr-155) interacts with FMN. Arg-164 is a binding site for substrate. Lys-251 is an FMN binding site. Residue His-275 is the Proton acceptor of the active site. Arg-278 serves as a coordination point for substrate. An FMN-binding site is contributed by 306–330 (DSGIRNGLDVVRMLALGADSVMLGR).

The protein belongs to the FMN-dependent alpha-hydroxy acid dehydrogenase family. FMN serves as cofactor.

The protein localises to the cell inner membrane. The enzyme catalyses (S)-lactate + A = pyruvate + AH2. In terms of biological role, catalyzes the conversion of L-lactate to pyruvate. Is coupled to the respiratory chain. This Acinetobacter baylyi (strain ATCC 33305 / BD413 / ADP1) protein is L-lactate dehydrogenase.